We begin with the raw amino-acid sequence, 511 residues long: MQKNTSQPTNTNEQSNQPSLNDQIVRRIEERQHLIDSGINPYPCSFNVTHHSATILTEFQDEAKTPVAVAGRIMTIRKMGKASFFNVQDSAGRIQIYLKKDDVGEAAYNMFKLLDIGDIVGVTGYTFRTKTGEISIHAESLELLTKSLRPIPIAKEKEVDGEKVVFDAFSDKELRYRQRYVDLIVNPEVRETFIKRTAIVAAMRNFFARHGWLEVETPILQPIYGGAAARPFTTHHNALDMQLYLRIANELYLKRLIVGGFDGVFEFAKDFRNEGIDRFHNPEFTQVELYVAYKDYNWMMNLVEELIYTTAMEVNKSDTTTFLGHEISVKPPFRRLTISDAIAEYTDKDIRNKSEEELRNIAKELGLELDPKIGNGKIIDEIFGEFVEPKLIQPTFITDYPTEMSPLAKEHAAQPGIVERFELIVGGKEVCNSFSELNDPVIQRERLESQAKLRLRGDEEAMVVDEDFLRAIEYGMPPCAGLGVGIDRLVMLLTGQESIRDVIFFPHLKPE.

Positions 1 to 20 (MQKNTSQPTNTNEQSNQPSL) are disordered. Positions 422 and 429 each coordinate Mg(2+).

It belongs to the class-II aminoacyl-tRNA synthetase family. Homodimer. It depends on Mg(2+) as a cofactor.

It is found in the cytoplasm. The catalysed reaction is tRNA(Lys) + L-lysine + ATP = L-lysyl-tRNA(Lys) + AMP + diphosphate. The protein is Lysine--tRNA ligase of Chlorobium chlorochromatii (strain CaD3).